The following is a 235-amino-acid chain: Large ribosomal subunit protein uL1 (235 aa).

The interval 1 to 22 (MSKNSKAYRAAAEKVDRSNPYT) is disordered.

The protein belongs to the universal ribosomal protein uL1 family. Part of the 50S ribosomal subunit.

In terms of biological role, binds directly to 23S rRNA. The L1 stalk is quite mobile in the ribosome, and is involved in E site tRNA release. Functionally, protein L1 is also a translational repressor protein, it controls the translation of the L11 operon by binding to its mRNA. The chain is Large ribosomal subunit protein uL1 from Mycobacterium ulcerans (strain Agy99).